A 352-amino-acid polypeptide reads, in one-letter code: Glutamine synthetase (352 aa).

Residues 3–82 enclose the GS beta-grasp domain; it reads YQAEYIWIDG…LCEVQLTDFT (80 aa). The 266-residue stretch at 87-352 folds into the GS catalytic domain; sequence TRAAALGVAE…TTPAPAEASV (266 aa). 2 residues coordinate Mg(2+): Glu108 and Glu110. Glu164 is a binding site for ATP. 2 residues coordinate Mg(2+): Glu169 and Glu176. Glu272 contacts L-glutamate.

Belongs to the glutamine synthetase family. Homooctamer and homotetramer. Requires Mg(2+) as cofactor.

The protein localises to the cytoplasm. It carries out the reaction L-glutamate + NH4(+) + ATP = L-glutamine + ADP + phosphate + H(+). Functionally, catalyzes the ATP-dependent biosynthesis of glutamine from glutamate and ammonia. This Frankia alni protein is Glutamine synthetase.